Here is a 291-residue protein sequence, read N- to C-terminus: uncharacterized protein (291 aa).

The segment at 1-82 (MEAEKETEQE…SYSSSPFETH (82 aa)) is disordered. 2 stretches are compositionally biased toward low complexity: residues 28-43 (HSHS…ISAS) and 59-78 (STSS…SSSP).

This is an uncharacterized protein from Arabidopsis thaliana (Mouse-ear cress).